The chain runs to 95 residues: Cell division topological specificity factor (95 aa).

This sequence belongs to the MinE family.

Functionally, prevents the cell division inhibition by proteins MinC and MinD at internal division sites while permitting inhibition at polar sites. This ensures cell division at the proper site by restricting the formation of a division septum at the midpoint of the long axis of the cell. The protein is Cell division topological specificity factor of Methylorubrum extorquens (strain PA1) (Methylobacterium extorquens).